We begin with the raw amino-acid sequence, 267 residues long: Glucosamine-6-phosphate deaminase (267 aa).

The active-site Proton acceptor; for enolization step is aspartate 72. The active-site For ring-opening step is aspartate 141. Histidine 143 functions as the Proton acceptor; for ring-opening step in the catalytic mechanism. Catalysis depends on glutamate 148, which acts as the For ring-opening step.

Belongs to the glucosamine/galactosamine-6-phosphate isomerase family. NagB subfamily.

The catalysed reaction is alpha-D-glucosamine 6-phosphate + H2O = beta-D-fructose 6-phosphate + NH4(+). It participates in amino-sugar metabolism; N-acetylneuraminate degradation; D-fructose 6-phosphate from N-acetylneuraminate: step 5/5. Its activity is regulated as follows. Allosterically activated by N-acetylglucosamine 6-phosphate (GlcNAc6P). Catalyzes the reversible isomerization-deamination of glucosamine 6-phosphate (GlcN6P) to form fructose 6-phosphate (Fru6P) and ammonium ion. This is Glucosamine-6-phosphate deaminase from Borrelia hermsii (strain HS1 / DAH).